The sequence spans 325 residues: Large ribosomal subunit protein uL4m (325 aa).

The tract at residues 113 to 158 is disordered; that stretch reads ASTKTRYEVHGSHKKMSPQKGTGNARRGTRQSPLMKGGGKTFGPKP.

It belongs to the universal ribosomal protein uL4 family. Component of the mitochondrial large ribosomal subunit (mt-LSU). Mature N.crassa 74S mitochondrial ribosomes consist of a small (37S) and a large (54S) subunit. The 37S small subunit contains a 16S ribosomal RNA (16S mt-rRNA) and 32 different proteins. The 54S large subunit contains a 23S rRNA (23S mt-rRNA) and 42 different proteins.

The protein resides in the mitochondrion. In terms of biological role, component of the mitochondrial ribosome (mitoribosome), a dedicated translation machinery responsible for the synthesis of mitochondrial genome-encoded proteins, including at least some of the essential transmembrane subunits of the mitochondrial respiratory chain. The mitoribosomes are attached to the mitochondrial inner membrane and translation products are cotranslationally integrated into the membrane. The sequence is that of Large ribosomal subunit protein uL4m (yml6) from Neurospora crassa (strain ATCC 24698 / 74-OR23-1A / CBS 708.71 / DSM 1257 / FGSC 987).